Consider the following 226-residue polypeptide: MKDLFLFSSLLDASHTFSYFFHIGLVALIAVIVAMMATRSMQLVPRGMQNLGEAFLEGVLSMGRDTMGSEKGARKYLPLVATLGIIVFFSNIIGIIPGFHAPTASLNLTLSLAIIVFVYYHFEGIRAQGFVKYFAHFMGPIKLLAPLMFPIEIVSHLSRVVSLSFRLFGNIKGDDLFLMVILALVPYIAPLPAYVLLTFMAFLQAFIFMILTYVYLAGATVVEEGH.

6 consecutive transmembrane segments (helical) span residues 17–37 (FSYFFHIGLVALIAVIVAMMA), 79–99 (LVATLGIIVFFSNIIGIIPGF), 105–125 (SLNLTLSLAIIVFVYYHFEGI), 134–154 (FAHFMGPIKLLAPLMFPIEIV), 176–196 (LFLMVILALVPYIAPLPAYVL), and 199–219 (FMAFLQAFIFMILTYVYLAGA).

It belongs to the ATPase A chain family. F-type ATPases have 2 components, CF(1) - the catalytic core - and CF(0) - the membrane proton channel. CF(1) has five subunits: alpha(3), beta(3), gamma(1), delta(1), epsilon(1). CF(0) has three main subunits: a(1), b(2) and c(9-12). The alpha and beta chains form an alternating ring which encloses part of the gamma chain. CF(1) is attached to CF(0) by a central stalk formed by the gamma and epsilon chains, while a peripheral stalk is formed by the delta and b chains.

Its subcellular location is the cell inner membrane. In terms of biological role, key component of the proton channel; it plays a direct role in the translocation of protons across the membrane. The sequence is that of ATP synthase subunit a from Campylobacter jejuni subsp. jejuni serotype O:6 (strain 81116 / NCTC 11828).